A 561-amino-acid chain; its full sequence is Putative transport protein ASA_2308 (561 aa).

The next 5 membrane-spanning stretches (helical) occupy residues 8–28, 37–57, 66–86, 90–110, and 161–181; these read LLHQ…LLLG, IGNT…GFEF, FMLF…SVFL, IHYI…TVGL, and NMGI…MLVV. 2 consecutive RCK C-terminal domains span residues 206 to 291 and 293 to 376; these read SDNE…NYRN and KEVF…KIGF. The next 5 helical transmembrane spans lie at 386-406, 409-429, 450-470, 476-496, and 541-561; these read LVAF…SLVF, LEFG…MGYL, LGLA…ILDH, AVVL…GYLF, and TYAV…GFWF.

This sequence belongs to the AAE transporter (TC 2.A.81) family. YbjL subfamily.

Its subcellular location is the cell membrane. This chain is Putative transport protein ASA_2308, found in Aeromonas salmonicida (strain A449).